Consider the following 283-residue polypeptide: uncharacterized protein (283 aa).

5 helical membrane passes run 8–28, 38–58, 73–93, 100–120, and 175–195; these read LILSIVGNILLGLIKIIIGYV, GIHSLSDVITSIIGIIGVKIA, FECLFSFFIGLALFFTAYEIG, IIYGEVIEVNAIMVGVAILSI, and AIAGIIVALMIAKVAFDICLT.

The protein belongs to the cation diffusion facilitator (CDF) transporter (TC 2.A.4) family.

The protein resides in the cell membrane. This is an uncharacterized protein from Methanocaldococcus jannaschii (strain ATCC 43067 / DSM 2661 / JAL-1 / JCM 10045 / NBRC 100440) (Methanococcus jannaschii).